Reading from the N-terminus, the 28-residue chain is Putative fruR/shl operon leader peptide (28 aa).

The polypeptide is Putative fruR/shl operon leader peptide (fruL) (Escherichia coli O6:H1 (strain CFT073 / ATCC 700928 / UPEC)).